The following is a 440-amino-acid chain: Ribosomal protein uS12 methylthiotransferase RimO (440 aa).

The 117-residue stretch at 1-117 folds into the MTTase N-terminal domain; sequence MKIFFISLGC…ITEVIDKVLG (117 aa). The [4Fe-4S] cluster site is built by Cys-10, Cys-46, Cys-80, Cys-154, Cys-158, and Cys-161. In terms of domain architecture, Radical SAM core spans 140-370; that stretch reads TTGGYYSFLK…MEIQQGIAFE (231 aa). The TRAM domain maps to 373–440; sequence ESMVGRKLKV…KEYDLIGTAE (68 aa).

It belongs to the methylthiotransferase family. RimO subfamily. Requires [4Fe-4S] cluster as cofactor.

The protein resides in the cytoplasm. It catalyses the reaction L-aspartate(89)-[ribosomal protein uS12]-hydrogen + (sulfur carrier)-SH + AH2 + 2 S-adenosyl-L-methionine = 3-methylsulfanyl-L-aspartate(89)-[ribosomal protein uS12]-hydrogen + (sulfur carrier)-H + 5'-deoxyadenosine + L-methionine + A + S-adenosyl-L-homocysteine + 2 H(+). Its function is as follows. Catalyzes the methylthiolation of an aspartic acid residue of ribosomal protein uS12. The protein is Ribosomal protein uS12 methylthiotransferase RimO of Lachnoclostridium phytofermentans (strain ATCC 700394 / DSM 18823 / ISDg) (Clostridium phytofermentans).